The primary structure comprises 133 residues: Large-conductance mechanosensitive channel (133 aa).

The next 2 helical transmembrane spans lie at F10–G30 and G76–V96.

The protein belongs to the MscL family. As to quaternary structure, homopentamer.

It is found in the cell inner membrane. In terms of biological role, channel that opens in response to stretch forces in the membrane lipid bilayer. May participate in the regulation of osmotic pressure changes within the cell. The chain is Large-conductance mechanosensitive channel from Haemophilus ducreyi (strain 35000HP / ATCC 700724).